Here is a 284-residue protein sequence, read N- to C-terminus: MAGCAARVPPGSEARLSLATFLLGASVLALPLLTRAGLQGRTGLALYVAGLNALLLLLYRPPRYQIAIRACFLGFVFGCGVLLSFSQSSWNHFGWYVCSLSLFHYSEYLVTAVNNPKSLSLDSFLLNHSLEYTVAALSSWIEFTLENIFWPELKQITWLSAAGLLMVIFGECLRKVAMFTAGSNFNHVVQSEKSDTHTLVTSGVYAWCRHPSYVGWFYWSIGTQVMLCNPICGVVYALTVWRFFRDRTEEEEISLIHFFGEEYLDYKKRVPTGLPFIKGVKVGL.

The Cytoplasmic segment spans residues 1–16 (MAGCAARVPPGSEARL). Residues 17–33 (SLATFLLGASVLALPLL) traverse the membrane as a helical segment. At 34 to 41 (TRAGLQGR) the chain is on the lumenal side. Residues 42-59 (TGLALYVAGLNALLLLLY) form a helical membrane-spanning segment. The Cytoplasmic segment spans residues 60-69 (RPPRYQIAIR). A helical membrane pass occupies residues 70–87 (ACFLGFVFGCGVLLSFSQ). Over 88 to 92 (SSWNH) the chain is Lumenal. A helical transmembrane segment spans residues 93–112 (FGWYVCSLSLFHYSEYLVTA). At 113-131 (VNNPKSLSLDSFLLNHSLE) the chain is on the cytoplasmic side. A helical transmembrane segment spans residues 132 to 149 (YTVAALSSWIEFTLENIF). Residues 150-154 (WPELK) are Lumenal-facing. Residues 155 to 174 (QITWLSAAGLLMVIFGECLR) form a helical membrane-spanning segment. The Cytoplasmic segment spans residues 175-212 (KVAMFTAGSNFNHVVQSEKSDTHTLVTSGVYAWCRHPS). S-adenosyl-L-methionine contacts are provided by residues glutamine 190, 197-200 (HTLV), tyrosine 205, and 210-213 (HPSY). Residues 213 to 228 (YVGWFYWSIGTQVMLC) form a helical membrane-spanning segment. Residue asparagine 229 is a topological domain, lumenal. Residues 230-244 (PICGVVYALTVWRFF) form a helical membrane-spanning segment. Topologically, residues 245 to 284 (RDRTEEEEISLIHFFGEEYLDYKKRVPTGLPFIKGVKVGL) are cytoplasmic. Arginine 247 contributes to the substrate binding site. Glutamate 251 provides a ligand contact to S-adenosyl-L-methionine.

The protein belongs to the class VI-like SAM-binding methyltransferase superfamily. Isoprenylcysteine carboxyl methyltransferase family.

The protein resides in the endoplasmic reticulum membrane. It carries out the reaction [protein]-C-terminal S-[(2E,6E)-farnesyl]-L-cysteine + S-adenosyl-L-methionine = [protein]-C-terminal S-[(2E,6E)-farnesyl]-L-cysteine methyl ester + S-adenosyl-L-homocysteine. Catalyzes the post-translational methylation of isoprenylated C-terminal cysteine residues. The sequence is that of Protein-S-isoprenylcysteine O-methyltransferase from Rattus norvegicus (Rat).